A 203-amino-acid chain; its full sequence is Holliday junction branch migration complex subunit RuvA (203 aa).

The interval Met1–Arg63 is domain I. Positions Thr64 to Lys142 are domain II. The segment at Glu143–Asn152 is flexible linker. Residues Asp153–Arg203 are domain III.

The protein belongs to the RuvA family. Homotetramer. Forms an RuvA(8)-RuvB(12)-Holliday junction (HJ) complex. HJ DNA is sandwiched between 2 RuvA tetramers; dsDNA enters through RuvA and exits via RuvB. An RuvB hexamer assembles on each DNA strand where it exits the tetramer. Each RuvB hexamer is contacted by two RuvA subunits (via domain III) on 2 adjacent RuvB subunits; this complex drives branch migration. In the full resolvosome a probable DNA-RuvA(4)-RuvB(12)-RuvC(2) complex forms which resolves the HJ.

Its subcellular location is the cytoplasm. Functionally, the RuvA-RuvB-RuvC complex processes Holliday junction (HJ) DNA during genetic recombination and DNA repair, while the RuvA-RuvB complex plays an important role in the rescue of blocked DNA replication forks via replication fork reversal (RFR). RuvA specifically binds to HJ cruciform DNA, conferring on it an open structure. The RuvB hexamer acts as an ATP-dependent pump, pulling dsDNA into and through the RuvAB complex. HJ branch migration allows RuvC to scan DNA until it finds its consensus sequence, where it cleaves and resolves the cruciform DNA. The sequence is that of Holliday junction branch migration complex subunit RuvA from Halalkalibacterium halodurans (strain ATCC BAA-125 / DSM 18197 / FERM 7344 / JCM 9153 / C-125) (Bacillus halodurans).